The chain runs to 146 residues: Hemoglobin subunit beta (146 aa).

Valine 1 is subject to N-acetylvaline; partial. The region spanning histidine 2 to histidine 146 is the Globin domain. Threonine 12 carries the post-translational modification Phosphothreonine. Lysine 59 carries the N6-acetyllysine modification. Histidine 63 serves as a coordination point for heme b. Residue lysine 82 is modified to N6-acetyllysine. Position 92 (histidine 92) interacts with heme b. Cysteine 93 is modified (S-nitrosocysteine). The residue at position 144 (lysine 144) is an N6-acetyllysine.

This sequence belongs to the globin family. Heterotetramer of two alpha chains and two beta chains. Red blood cells.

In terms of biological role, involved in oxygen transport from the lung to the various peripheral tissues. The polypeptide is Hemoglobin subunit beta (HBB) (Procavia capensis habessinica (Abyssinian hyrax)).